Here is a 307-residue protein sequence, read N- to C-terminus: Ornithine carbamoyltransferase (307 aa).

Residues 50-53 (STRT), Q77, R101, and 128-131 (HPCQ) contribute to the carbamoyl phosphate site. L-ornithine contacts are provided by residues N160, D224, and 228–229 (SM). Carbamoyl phosphate is bound by residues 264 to 265 (CL) and R292.

Belongs to the aspartate/ornithine carbamoyltransferase superfamily. OTCase family.

Its subcellular location is the cytoplasm. It catalyses the reaction carbamoyl phosphate + L-ornithine = L-citrulline + phosphate + H(+). It functions in the pathway amino-acid biosynthesis; L-arginine biosynthesis; L-arginine from L-ornithine and carbamoyl phosphate: step 1/3. Reversibly catalyzes the transfer of the carbamoyl group from carbamoyl phosphate (CP) to the N(epsilon) atom of ornithine (ORN) to produce L-citrulline. The chain is Ornithine carbamoyltransferase from Mycolicibacterium gilvum (strain PYR-GCK) (Mycobacterium gilvum (strain PYR-GCK)).